The primary structure comprises 388 residues: Succinyl-diaminopimelate desuccinylase (388 aa).

His-72 contributes to the Zn(2+) binding site. The active site involves Asp-74. Asp-105 contacts Zn(2+). Catalysis depends on Glu-139, which acts as the Proton acceptor. Zn(2+)-binding residues include Glu-140, Glu-168, and His-353.

The protein belongs to the peptidase M20A family. DapE subfamily. In terms of assembly, homodimer. Zn(2+) is required as a cofactor. It depends on Co(2+) as a cofactor.

It catalyses the reaction N-succinyl-(2S,6S)-2,6-diaminopimelate + H2O = (2S,6S)-2,6-diaminopimelate + succinate. It functions in the pathway amino-acid biosynthesis; L-lysine biosynthesis via DAP pathway; LL-2,6-diaminopimelate from (S)-tetrahydrodipicolinate (succinylase route): step 3/3. Its function is as follows. Catalyzes the hydrolysis of N-succinyl-L,L-diaminopimelic acid (SDAP), forming succinate and LL-2,6-diaminopimelate (DAP), an intermediate involved in the bacterial biosynthesis of lysine and meso-diaminopimelic acid, an essential component of bacterial cell walls. The sequence is that of Succinyl-diaminopimelate desuccinylase from Orientia tsutsugamushi (strain Ikeda) (Rickettsia tsutsugamushi).